A 449-amino-acid polypeptide reads, in one-letter code: Glucose-6-phosphate isomerase (449 aa).

The active-site Proton donor is the glutamate 291. Catalysis depends on residues histidine 312 and lysine 426.

This sequence belongs to the GPI family.

It is found in the cytoplasm. The catalysed reaction is alpha-D-glucose 6-phosphate = beta-D-fructose 6-phosphate. It functions in the pathway carbohydrate biosynthesis; gluconeogenesis. The protein operates within carbohydrate degradation; glycolysis; D-glyceraldehyde 3-phosphate and glycerone phosphate from D-glucose: step 2/4. Catalyzes the reversible isomerization of glucose-6-phosphate to fructose-6-phosphate. This chain is Glucose-6-phosphate isomerase, found in Streptococcus agalactiae serotype Ia (strain ATCC 27591 / A909 / CDC SS700).